Reading from the N-terminus, the 57-residue chain is Protein new-glue 4 (57 aa).

An N-terminal signal peptide occupies residues 1–16 (MEWKLLLIVLPWLLVC).

It is found in the secreted. The polypeptide is Protein new-glue 4 (ng4) (Drosophila melanogaster (Fruit fly)).